A 433-amino-acid chain; its full sequence is N-lysine methyltransferase SMYD2 (433 aa).

Positions 7-241 (GGLERFCSAG…PGDEVFTSYI (235 aa)) constitute an SET domain. 17–19 (KGR) contacts S-adenosyl-L-methionine. Zn(2+) is bound by residues cysteine 52, cysteine 55, cysteine 65, cysteine 68, cysteine 74, cysteine 78, histidine 86, and cysteine 90. The segment at 52–90 (CECCFARKEGLSKCGRCKQAFYCDVECQKEDWPLHKLEC) adopts an MYND-type zinc-finger fold. Residues histidine 137, 206–207 (NH), and 258–260 (YFF) each bind S-adenosyl-L-methionine. At serine 283 the chain carries Phosphoserine.

This sequence belongs to the class V-like SAM-binding methyltransferase superfamily. Interacts with RNA polymerase II and HELZ. Interacts with SIN3A and HDAC1. Interacts (via MYND-type zinc finger) with EPB41L3. Interacts (via SET domain) with p53/TP53. Interacts with RB1 and HSP90AA1.

It localises to the cytoplasm. It is found in the cytosol. The protein resides in the nucleus. It catalyses the reaction L-lysyl(4)-[histone H3] + 3 S-adenosyl-L-methionine = N(6),N(6),N(6)-trimethyl-L-lysyl(4)-[histone H3] + 3 S-adenosyl-L-homocysteine + 3 H(+). The catalysed reaction is L-lysyl-[protein] + S-adenosyl-L-methionine = N(6)-methyl-L-lysyl-[protein] + S-adenosyl-L-homocysteine + H(+). Its function is as follows. Protein-lysine N-methyltransferase that methylates both histones and non-histone proteins, including p53/TP53 and RB1. Specifically trimethylates histone H3 'Lys-4' (H3K4me3) in vivo. The activity requires interaction with HSP90alpha. Shows even higher methyltransferase activity on p53/TP53. Monomethylates 'Lys-370' of p53/TP53, leading to decreased DNA-binding activity and subsequent transcriptional regulation activity of p53/TP53. Monomethylates RB1 at 'Lys-860'. This chain is N-lysine methyltransferase SMYD2 (Smyd2), found in Rattus norvegicus (Rat).